The sequence spans 346 residues: Putative agmatine deiminase (346 aa).

Cysteine 338 (amidino-cysteine intermediate) is an active-site residue.

It belongs to the agmatine deiminase family.

It catalyses the reaction agmatine + H2O = N-carbamoylputrescine + NH4(+). The protein is Putative agmatine deiminase of Streptomyces avermitilis (strain ATCC 31267 / DSM 46492 / JCM 5070 / NBRC 14893 / NCIMB 12804 / NRRL 8165 / MA-4680).